A 315-amino-acid chain; its full sequence is tRNA-dihydrouridine(16) synthase (315 aa).

Residues 7-9 (PME) and glutamine 68 contribute to the FMN site. The Proton donor role is filled by cysteine 98. FMN is bound by residues lysine 139, 200–202 (NGE), and 224–225 (GR).

Belongs to the Dus family. DusC subfamily. It depends on FMN as a cofactor.

The catalysed reaction is 5,6-dihydrouridine(16) in tRNA + NADP(+) = uridine(16) in tRNA + NADPH + H(+). It carries out the reaction 5,6-dihydrouridine(16) in tRNA + NAD(+) = uridine(16) in tRNA + NADH + H(+). Functionally, catalyzes the synthesis of 5,6-dihydrouridine (D), a modified base found in the D-loop of most tRNAs, via the reduction of the C5-C6 double bond in target uridines. Specifically modifies U16 in tRNAs. This is tRNA-dihydrouridine(16) synthase from Shigella flexneri.